A 298-amino-acid polypeptide reads, in one-letter code: DDRGK domain-containing protein 1 (298 aa).

The helical transmembrane segment at 1 to 21 (MDIVLYFVAVPILIVLIVSAV) threads the bilayer. Residues 22-298 (KVRGKTEEDN…NLIPEIHNTA (277 aa)) are Cytoplasmic-facing. Residues 71–149 (NSAYREAADN…EERRKEDKKE (79 aa)) form a disordered region. The segment covering 82–94 (SPVEVEEEYEEAE) has biased composition (acidic residues). The span at 110-149 (KLEEKQAKRAQREAELEEREERKRTQELREEERRKEDKKE) shows a compositional bias: basic and acidic residues. Residues 181–195 (SFVVEEQGEADELTE) carry the UFM1-interacting motif (UFIM) motif. The region spanning 215-259 (VLLEDLASHFGLRTQDAISRLQDLLSDGSITGVIDDRGKFIFITP) is the PCI domain.

The protein belongs to the DDRGK1 family. As to quaternary structure, component of the UFM1 ribosome E3 ligase (UREL) complex, composed of ufl1, ddrgk1 and cdk5rap3.

The protein resides in the endoplasmic reticulum membrane. In terms of biological role, component of the UFM1 ribosome E3 ligase (UREL) complex, a multiprotein complex that catalyzes ufmylation of endoplasmic reticulum-docked proteins. The UREL complex plays a key role in ribosome recycling by mediating mono-ufmylation of the RPL26/uL24 subunit of the 60S ribosome following ribosome dissociation: ufmylation weakens the junction between post-termination 60S subunits and SEC61 translocons, promoting release and recycling of the large ribosomal subunit from the endoplasmic reticulum membrane. Ufmylation of RPL26/uL24 and subsequent 60S ribosome recycling either take place after normal termination of translation or after ribosome stalling during cotranslational translocation at the endoplasmic reticulum. Within the UREL complex, DDRGK1 tethers the complex to the endoplasmic reticulum membrane to restrict its activity to endoplasmic reticulum-docked ribosomes and acts as an ufmylation 'reader': following RPL26/uL24 ufmylation, DDRGK1 specifically binds to ufmylated RPL26/uL24 via its UFIM motif, resulting in stable association between the 60S ribosome and the UREL complex, followed by dissociation of the 60S ribosome subunit from the endoplasmic reticulum membrane. The UREL complex is also involved in reticulophagy in response to endoplasmic reticulum stress by promoting ufmylation of proteins such as CYB5R3 and RPN1, thereby promoting lysosomal degradation of ufmylated proteins. Required for stabilization and ufmylation of ATG9A. The sequence is that of DDRGK domain-containing protein 1 from Osmerus mordax (Rainbow smelt).